The following is a 371-amino-acid chain: UDP-N-acetylglucosamine--N-acetylmuramyl-(pentapeptide) pyrophosphoryl-undecaprenol N-acetylglucosamine transferase (371 aa).

Residues 10–12, Asn-124, Arg-165, Ser-197, Ile-251, and Gln-296 each bind UDP-N-acetyl-alpha-D-glucosamine; that span reads TGG.

It belongs to the glycosyltransferase 28 family. MurG subfamily.

It is found in the cell membrane. The enzyme catalyses di-trans,octa-cis-undecaprenyl diphospho-N-acetyl-alpha-D-muramoyl-L-alanyl-D-glutamyl-meso-2,6-diaminopimeloyl-D-alanyl-D-alanine + UDP-N-acetyl-alpha-D-glucosamine = di-trans,octa-cis-undecaprenyl diphospho-[N-acetyl-alpha-D-glucosaminyl-(1-&gt;4)]-N-acetyl-alpha-D-muramoyl-L-alanyl-D-glutamyl-meso-2,6-diaminopimeloyl-D-alanyl-D-alanine + UDP + H(+). Its pathway is cell wall biogenesis; peptidoglycan biosynthesis. Functionally, cell wall formation. Catalyzes the transfer of a GlcNAc subunit on undecaprenyl-pyrophosphoryl-MurNAc-pentapeptide (lipid intermediate I) to form undecaprenyl-pyrophosphoryl-MurNAc-(pentapeptide)GlcNAc (lipid intermediate II). The protein is UDP-N-acetylglucosamine--N-acetylmuramyl-(pentapeptide) pyrophosphoryl-undecaprenol N-acetylglucosamine transferase of Carboxydothermus hydrogenoformans (strain ATCC BAA-161 / DSM 6008 / Z-2901).